The sequence spans 191 residues: Recombination protein RecR (191 aa).

The C4-type zinc finger occupies 51–66 (CQTCFHLSADPECEIC). One can recognise a Toprim domain in the interval 74–168 (GVICVVADSR…SVSRIAYGLP (95 aa)).

It belongs to the RecR family.

Functionally, may play a role in DNA repair. It seems to be involved in an RecBC-independent recombinational process of DNA repair. It may act with RecF and RecO. The chain is Recombination protein RecR from Synechococcus sp. (strain CC9605).